Consider the following 352-residue polypeptide: Molybdenum import ATP-binding protein ModC (352 aa).

Residues M1–E229 form the ABC transporter domain. G31–T38 serves as a coordination point for ATP. In terms of domain architecture, Mop spans Q289–A352.

This sequence belongs to the ABC transporter superfamily. Molybdate importer (TC 3.A.1.8) family. In terms of assembly, the complex is composed of two ATP-binding proteins (ModC), two transmembrane proteins (ModB) and a solute-binding protein (ModA).

Its subcellular location is the cell inner membrane. It carries out the reaction molybdate(out) + ATP + H2O = molybdate(in) + ADP + phosphate + H(+). In terms of biological role, part of the ABC transporter complex ModABC involved in molybdenum import. Responsible for energy coupling to the transport system. The sequence is that of Molybdenum import ATP-binding protein ModC from Shigella dysenteriae serotype 1 (strain Sd197).